The following is a 660-amino-acid chain: Bifunctional polymyxin resistance protein ArnA (660 aa).

Residues 1-304 form a formyltransferase ArnAFT region; the sequence is MKAIVFAYHD…DMSMVTDVRV (304 aa). Histidine 104 serves as the catalytic Proton donor; for formyltransferase activity. Residues arginine 114 and 136-140 each bind (6R)-10-formyltetrahydrofolate; that span reads VLKPD. Residues 314–660 form a dehydrogenase ArnADH region; sequence HRKRVLILGV…RGAVEELGKN (347 aa). NAD(+)-binding positions include aspartate 347 and 368–369; that span reads DI. Residues alanine 393, tyrosine 398, and 432 to 433 each bind UDP-alpha-D-glucuronate; that span reads TS. The active-site Proton acceptor; for decarboxylase activity is glutamate 434. UDP-alpha-D-glucuronate-binding positions include arginine 460, asparagine 492, 526 to 535, and tyrosine 613; that span reads KLVDGGEQKR. Arginine 619 (proton donor; for decarboxylase activity) is an active-site residue.

The protein in the N-terminal section; belongs to the Fmt family. UDP-L-Ara4N formyltransferase subfamily. In the C-terminal section; belongs to the NAD(P)-dependent epimerase/dehydratase family. UDP-glucuronic acid decarboxylase subfamily. Homohexamer, formed by a dimer of trimers.

The catalysed reaction is UDP-alpha-D-glucuronate + NAD(+) = UDP-beta-L-threo-pentopyranos-4-ulose + CO2 + NADH. The enzyme catalyses UDP-4-amino-4-deoxy-beta-L-arabinose + (6R)-10-formyltetrahydrofolate = UDP-4-deoxy-4-formamido-beta-L-arabinose + (6S)-5,6,7,8-tetrahydrofolate + H(+). Its pathway is nucleotide-sugar biosynthesis; UDP-4-deoxy-4-formamido-beta-L-arabinose biosynthesis; UDP-4-deoxy-4-formamido-beta-L-arabinose from UDP-alpha-D-glucuronate: step 1/3. The protein operates within nucleotide-sugar biosynthesis; UDP-4-deoxy-4-formamido-beta-L-arabinose biosynthesis; UDP-4-deoxy-4-formamido-beta-L-arabinose from UDP-alpha-D-glucuronate: step 3/3. It functions in the pathway bacterial outer membrane biogenesis; lipopolysaccharide biosynthesis. Bifunctional enzyme that catalyzes the oxidative decarboxylation of UDP-glucuronic acid (UDP-GlcUA) to UDP-4-keto-arabinose (UDP-Ara4O) and the addition of a formyl group to UDP-4-amino-4-deoxy-L-arabinose (UDP-L-Ara4N) to form UDP-L-4-formamido-arabinose (UDP-L-Ara4FN). The modified arabinose is attached to lipid A and is required for resistance to polymyxin and cationic antimicrobial peptides. This is Bifunctional polymyxin resistance protein ArnA from Photorhabdus laumondii subsp. laumondii (strain DSM 15139 / CIP 105565 / TT01) (Photorhabdus luminescens subsp. laumondii).